A 566-amino-acid chain; its full sequence is MGTSSGSNLPHQMLPPRQQLQTSLSLVSSDPHLSRSNSGIVRESPAESASSQETWPTSKSIMGRKTDSGKTGPDSHDQHVIRHVSIADKVSLRDIARERLDIVAERMHRLPEEYLEELKNGLKAILEGNGAQPIDEFMFLQKFVQTRSDLTSKTLVRAHRVQLEVLVVINTGIQAFLHPNINLSQSSLIEIFVYKRCRNIACQNELPADGCPCEICANRKGFCNLCMCVICNKFDFAVNTCRWIGCDVCSHWTHTDCAIRDGEISMGVSPKSVSGMGEMLFKCRACNHTSELLGWVKDVFQHCAPNWDRESLMKELDFVSRIFRGSEDTRGRKLFWKCEELMEKIKGGLAEATAAKLILMFFQEIELDSPKSLESGEGGGTIAPQDACNRIAEVVKETLRKMEIVGEEKTRMYKKARMGLEECEREVEEKAKQVAELQMERQKKKQQIEEVERIVRLKQAEAEMFQLKANEAKVEAERLERIVKAKKEKTEEEYASNYLKLRLSEAEAEKEYLFEKIKEQESGGNGGEASQAVMYSKIREMLHGYNASSPRVDPRSNQRNPFRSNP.

A compositionally biased stretch (polar residues) spans methionine 1–proline 10. The disordered stretch occupies residues methionine 1–histidine 79. Low complexity predominate over residues glutamine 18–serine 29. Over residues glutamate 47 to serine 60 the composition is skewed to polar residues. Residues arginine 64–histidine 79 show a composition bias toward basic and acidic residues. Residues leucine 225 to threonine 289 form a PHD-type zinc finger. Residues glutamate 407 to serine 522 adopt a coiled-coil conformation. The segment at tyrosine 545–proline 566 is disordered. The segment covering arginine 555–proline 566 has biased composition (polar residues).

As to quaternary structure, self-interacts. Interacts with OBE2, OBE3 and OBE4. Binds to VPg of pea seed borne mosaic virus (PSbMV), turnip mosaic virus (TuMV) and lettuce mosaic virus (LMV), but not with VPg of tobacco etch virus (TEV), cowpea mosaic virus (CPMV), tomato black ring virus (TBRV) and grapevine fan leaf virus (GFLV). Interacts with RBL. Expressed in roots, seedlings, stems, leaves, flowers and siliques, especially in the vasculature.

It localises to the nucleus. It is found in the nucleoplasm. Probable transcription factor that acts together with OBE2 for the maintenance and/or establishment of both the shoot and root meristems, probably by controlling the expression of the meristem genes such as WUS, PLT1 and PLT2 and of genes required for auxin responses. Promotes cell meristematic activity via the WUSCHEL-CLAVATA pathway. Involved in the development of the basal pole and in auxin-mediated root and vascular development in the embryo. Confers sensitivity to turnip mosaic virus (TuMV) probably by promoting viral movement and multiplication via interaction with TuMV VPg. The sequence is that of Protein OBERON 1 from Arabidopsis thaliana (Mouse-ear cress).